Consider the following 430-residue polypeptide: UDP-N-acetylglucosamine 1-carboxyvinyltransferase (430 aa).

22 to 23 (KN) is a phosphoenolpyruvate binding site. A UDP-N-acetyl-alpha-D-glucosamine-binding site is contributed by Arg-102. The active-site Proton donor is the Cys-126. The residue at position 126 (Cys-126) is a 2-(S-cysteinyl)pyruvic acid O-phosphothioketal. UDP-N-acetyl-alpha-D-glucosamine is bound by residues 131-135 (RPVDL), 172-175 (KVSV), Asp-317, and Ile-339.

It belongs to the EPSP synthase family. MurA subfamily.

The protein localises to the cytoplasm. It catalyses the reaction phosphoenolpyruvate + UDP-N-acetyl-alpha-D-glucosamine = UDP-N-acetyl-3-O-(1-carboxyvinyl)-alpha-D-glucosamine + phosphate. The protein operates within cell wall biogenesis; peptidoglycan biosynthesis. Its function is as follows. Cell wall formation. Adds enolpyruvyl to UDP-N-acetylglucosamine. In Sinorhizobium fredii (strain NBRC 101917 / NGR234), this protein is UDP-N-acetylglucosamine 1-carboxyvinyltransferase.